A 235-amino-acid chain; its full sequence is 7-cyano-7-deazaguanine synthase (235 aa).

13–23 is an ATP binding site; the sequence is FSGGLDSTTCL. Zn(2+)-binding residues include Cys197, Cys207, Cys210, and Cys213.

It belongs to the QueC family. Zn(2+) is required as a cofactor.

The catalysed reaction is 7-carboxy-7-deazaguanine + NH4(+) + ATP = 7-cyano-7-deazaguanine + ADP + phosphate + H2O + H(+). It participates in purine metabolism; 7-cyano-7-deazaguanine biosynthesis. In terms of biological role, catalyzes the ATP-dependent conversion of 7-carboxy-7-deazaguanine (CDG) to 7-cyano-7-deazaguanine (preQ(0)). The sequence is that of 7-cyano-7-deazaguanine synthase from Solidesulfovibrio magneticus (strain ATCC 700980 / DSM 13731 / RS-1) (Desulfovibrio magneticus).